The following is a 156-amino-acid chain: Ribonuclease H (156 aa).

Residues 2–144 (TMKNVQAFTD…CDVLARTQAS (143 aa)) enclose the RNase H type-1 domain. D11, E49, D71, and D136 together coordinate Mg(2+).

Belongs to the RNase H family. In terms of assembly, monomer. Mg(2+) is required as a cofactor.

It is found in the cytoplasm. The catalysed reaction is Endonucleolytic cleavage to 5'-phosphomonoester.. Its function is as follows. Endonuclease that specifically degrades the RNA of RNA-DNA hybrids. The chain is Ribonuclease H from Nitratidesulfovibrio vulgaris (strain DSM 19637 / Miyazaki F) (Desulfovibrio vulgaris).